The primary structure comprises 98 residues: MASTNFRPLHDRVVVRRVESEAKTKGGIIIPDTAKEKPQEGEIVAVGSGARDESGKVVALDVKAGDRILFGKWSGTEVKIDGEDLLIMKEADIMGIIG.

This sequence belongs to the GroES chaperonin family. In terms of assembly, heptamer of 7 subunits arranged in a ring. Interacts with the chaperonin GroEL.

The protein localises to the cytoplasm. In terms of biological role, together with the chaperonin GroEL, plays an essential role in assisting protein folding. The GroEL-GroES system forms a nano-cage that allows encapsulation of the non-native substrate proteins and provides a physical environment optimized to promote and accelerate protein folding. GroES binds to the apical surface of the GroEL ring, thereby capping the opening of the GroEL channel. The polypeptide is Co-chaperonin GroES (Rhizobium leguminosarum bv. trifolii (strain WSM2304)).